Here is an 89-residue protein sequence, read N- to C-terminus: Small ribosomal subunit protein uS15 (89 aa).

It belongs to the universal ribosomal protein uS15 family. Part of the 30S ribosomal subunit. Forms a bridge to the 50S subunit in the 70S ribosome, contacting the 23S rRNA.

Functionally, one of the primary rRNA binding proteins, it binds directly to 16S rRNA where it helps nucleate assembly of the platform of the 30S subunit by binding and bridging several RNA helices of the 16S rRNA. In terms of biological role, forms an intersubunit bridge (bridge B4) with the 23S rRNA of the 50S subunit in the ribosome. In Blochmanniella pennsylvanica (strain BPEN), this protein is Small ribosomal subunit protein uS15.